The sequence spans 401 residues: 1-deoxy-D-xylulose 5-phosphate reductoisomerase (401 aa).

Threonine 10, glycine 11, serine 12, isoleucine 13, asparagine 38, and asparagine 124 together coordinate NADPH. Lysine 125 contacts 1-deoxy-D-xylulose 5-phosphate. Residue glutamate 126 coordinates NADPH. Position 150 (aspartate 150) interacts with Mn(2+). 1-deoxy-D-xylulose 5-phosphate-binding residues include serine 151, glutamate 152, serine 186, and histidine 209. Mn(2+) is bound at residue glutamate 152. Glycine 215 is a binding site for NADPH. Serine 222, asparagine 227, lysine 228, and glutamate 231 together coordinate 1-deoxy-D-xylulose 5-phosphate. Glutamate 231 lines the Mn(2+) pocket.

The protein belongs to the DXR family. It depends on Mg(2+) as a cofactor. Mn(2+) serves as cofactor.

It catalyses the reaction 2-C-methyl-D-erythritol 4-phosphate + NADP(+) = 1-deoxy-D-xylulose 5-phosphate + NADPH + H(+). Its pathway is isoprenoid biosynthesis; isopentenyl diphosphate biosynthesis via DXP pathway; isopentenyl diphosphate from 1-deoxy-D-xylulose 5-phosphate: step 1/6. In terms of biological role, catalyzes the NADPH-dependent rearrangement and reduction of 1-deoxy-D-xylulose-5-phosphate (DXP) to 2-C-methyl-D-erythritol 4-phosphate (MEP). This Vibrio campbellii (strain ATCC BAA-1116) protein is 1-deoxy-D-xylulose 5-phosphate reductoisomerase.